The sequence spans 251 residues: Small ribosomal subunit protein uS2B (251 aa).

S2 carries the post-translational modification N-acetylserine. Over residues 214-225 (AVEEASATGATE) the composition is skewed to low complexity. Positions 214-251 (AVEEASATGATEEATEEATEETTEATEWAEDNTENATW) are disordered. Residues 226-251 (EATEEATEETTEATEWAEDNTENATW) are compositionally biased toward acidic residues.

This sequence belongs to the universal ribosomal protein uS2 family. In terms of assembly, component of the small ribosomal subunit. Mature ribosomes consist of a small (40S) and a large (60S) subunit. The 40S subunit contains about 33 different proteins and 1 molecule of RNA (18S). The 60S subunit contains about 49 different proteins and 3 molecules of RNA (25S, 5.8S and 5S). Interacts with RPS21.

The protein resides in the cytoplasm. Its function is as follows. Required for the assembly and/or stability of the 40S ribosomal subunit. Required for the processing of the 20S rRNA-precursor to mature 18S rRNA in a late step of the maturation of 40S ribosomal subunits. In Vanderwaltozyma polyspora (strain ATCC 22028 / DSM 70294 / BCRC 21397 / CBS 2163 / NBRC 10782 / NRRL Y-8283 / UCD 57-17) (Kluyveromyces polysporus), this protein is Small ribosomal subunit protein uS2B.